A 206-amino-acid polypeptide reads, in one-letter code: Probable GTP-binding protein EngB (206 aa).

Positions 8-195 constitute an EngB-type G domain; the sequence is RDAEVVLVGR…EECLRTRFHE (188 aa). GTP is bound by residues 16–23, 41–45, 60–63, 140–143, and 175–177; these read GRSNVGKS, GVTRQ, DLPG, NKTD, and ICA. Residues Ser23 and Thr43 each coordinate Mg(2+).

Belongs to the TRAFAC class TrmE-Era-EngA-EngB-Septin-like GTPase superfamily. EngB GTPase family. It depends on Mg(2+) as a cofactor.

In terms of biological role, necessary for normal cell division and for the maintenance of normal septation. The protein is Probable GTP-binding protein EngB of Halorubrum lacusprofundi (strain ATCC 49239 / DSM 5036 / JCM 8891 / ACAM 34).